Reading from the N-terminus, the 288-residue chain is Syntaxin-1B (288 aa).

A compositionally biased stretch (basic and acidic residues) spans 1–13 (MKDRTQELRSAKD). The disordered stretch occupies residues 1–20 (MKDRTQELRSAKDSDDEEEV). At 1-264 (MKDRTQELRS…KYQSKARRKK (264 aa)) the chain is on the cytoplasmic side. Ser-10 and Ser-14 each carry phosphoserine. The stretch at 29 to 104 (MDEFFEQVEE…IEQSIEQEEG (76 aa)) forms a coiled coil. The 63-residue stretch at 191-253 (LNEIETRHNE…ERAVSDTKKA (63 aa)) folds into the t-SNARE coiled-coil homology domain. Residues 265–288 (IMIIICCVVLGVVLASSIGGTLGL) traverse the membrane as a helical; Anchor for type IV membrane protein segment.

This sequence belongs to the syntaxin family. In terms of assembly, interacts with OTOF. Interacts with SYT6 and SYT8; the interaction is Ca(2+)-dependent. Phosphorylated by CK2.

The protein localises to the membrane. The protein resides in the nucleus. Its subcellular location is the cytoplasm. It localises to the cytoskeleton. It is found in the microtubule organizing center. The protein localises to the centrosome. The protein resides in the spindle. Potentially involved in docking of synaptic vesicles at presynaptic active zones. May mediate Ca(2+)-regulation of exocytosis acrosomal reaction in sperm. The sequence is that of Syntaxin-1B (STX1B) from Homo sapiens (Human).